The following is a 62-amino-acid chain: Cobrotoxin II (62 aa).

The segment covering 1 to 16 has biased composition (polar residues); it reads LECHNQQSSQTPTTTG. Positions 1 to 23 are disordered; sequence LECHNQQSSQTPTTTGCSGGENN. Disulfide bonds link Cys3/Cys24, Cys17/Cys41, Cys43/Cys54, and Cys55/Cys60.

This sequence belongs to the three-finger toxin family. Short-chain subfamily. Type I alpha-neurotoxin sub-subfamily. Expressed by the venom gland.

It is found in the secreted. Binds to muscle nicotinic acetylcholine receptor (nAChR) and inhibit acetylcholine from binding to the receptor, thereby impairing neuromuscular transmission. This Naja kaouthia (Monocled cobra) protein is Cobrotoxin II.